A 39-amino-acid polypeptide reads, in one-letter code: Large ribosomal subunit protein bL36 (39 aa).

The protein belongs to the bacterial ribosomal protein bL36 family.

The protein is Large ribosomal subunit protein bL36 of Lactiplantibacillus plantarum (strain ATCC BAA-793 / NCIMB 8826 / WCFS1) (Lactobacillus plantarum).